We begin with the raw amino-acid sequence, 541 residues long: Chaperonin GroEL, cyanelle (541 aa).

Residues 29 to 32 (TLGP), 86 to 90 (DGTTT), glycine 413, 479 to 481 (NAA), and aspartate 495 each bind ATP.

This sequence belongs to the chaperonin (HSP60) family. As to quaternary structure, forms a cylinder of 14 subunits composed of two heptameric rings stacked back-to-back. Interacts with the co-chaperonin GroES.

The protein localises to the plastid. Its subcellular location is the cyanelle. It carries out the reaction ATP + H2O + a folded polypeptide = ADP + phosphate + an unfolded polypeptide.. Functionally, together with its co-chaperonin GroES, plays an essential role in assisting protein folding. The GroEL-GroES system forms a nano-cage that allows encapsulation of the non-native substrate proteins and provides a physical environment optimized to promote and accelerate protein folding. This is Chaperonin GroEL, cyanelle from Cyanophora paradoxa.